Here is a 479-residue protein sequence, read N- to C-terminus: Anaerobic nitric oxide reductase flavorubredoxin (479 aa).

The segment at 30–210 (LRGSSYNSYL…PFSRLVTPKI (181 aa)) is zinc metallo-hydrolase. Fe cation contacts are provided by His-79, Glu-81, Asp-83, His-147, Asp-166, and His-227. Positions 254–393 (ITIFYDTMSN…LCREHGREIA (140 aa)) constitute a Flavodoxin-like domain. Residues 260–264 (TMSNN) and 342–369 (AFGS…EMSL) contribute to the FMN site. In terms of domain architecture, Rubredoxin-like spans 423 to 474 (GPRMQCSVCQWIYDPAKGEPMQDVAPGTPWSEVPDNFLCPECSLGKDVFEEL). Fe cation is bound by residues Cys-428, Cys-431, Cys-461, and Cys-464.

The protein in the N-terminal section; belongs to the zinc metallo-hydrolase group 3 family. As to quaternary structure, homotetramer. Requires Fe cation as cofactor. The cofactor is FMN.

It is found in the cytoplasm. It participates in nitrogen metabolism; nitric oxide reduction. In terms of biological role, anaerobic nitric oxide reductase; uses NADH to detoxify nitric oxide (NO), protecting several 4Fe-4S NO-sensitive enzymes. Has at least 2 reductase partners, only one of which (NorW, flavorubredoxin reductase) has been identified. NO probably binds to the di-iron center; electrons enter from the NorW at rubredoxin and are transferred sequentially to the FMN center and the di-iron center. Also able to function as an aerobic oxygen reductase. In Shigella boydii serotype 4 (strain Sb227), this protein is Anaerobic nitric oxide reductase flavorubredoxin.